Reading from the N-terminus, the 360-residue chain is MIEDTMTLLSLLGRIMRYFLLRPETLFLLCISLALWSYFFHTDEVKTIVKSSRDAVKMVKGKVAEIMQNDRLGGLDVLEAEFSKTWEFKSHNVAVYSIQGRRDHMEDRFEVLTDLANKTHPSIFGIFDGHGGETAAEYVKSRLPEALKQHLQDYEKDKENSVLTYQTILEQQILSIDREMLEKLTVSYDEAGTTCLIALLSDKDLTVANVGDSRGVLCDKDGNAIPLSHDHKPYQLKERKRIKRAGGFISFNGSWRVQGILAMSRSLGDYPLKNLNVVIPDPDILTFDLDKLQPEFMILASDGLWDAFSNEEAVRFIKERLDEPHFGAKSIVLQSFYRGCPDNITVMVVKFRNSSKTEEH.

Over M1 to T25 the chain is Extracellular. The helical transmembrane segment at L26–T42 threads the bilayer. Residues D43–H360 lie on the Cytoplasmic side of the membrane. The PPM-type phosphatase domain occupies N92–F351. The Mn(2+) site is built by D128, G129, D302, and D342.

This sequence belongs to the PP2C family. As to quaternary structure, interacts with MAP3K7/TAK1 and MAP3K5. Requires Mg(2+) as cofactor. Mn(2+) is required as a cofactor. Expressed in brain, heart, testis, liver, lung and skeletal muscle.

Its subcellular location is the membrane. It carries out the reaction O-phospho-L-seryl-[protein] + H2O = L-seryl-[protein] + phosphate. It catalyses the reaction O-phospho-L-threonyl-[protein] + H2O = L-threonyl-[protein] + phosphate. Acts as a suppressor of the SAPK signaling pathways by associating with and dephosphorylating MAP3K7/TAK1 and MAP3K5, and by attenuating the association between MAP3K7/TAK1 and MAP2K4 or MAP2K6. The chain is Protein phosphatase 1L (Ppm1l) from Mus musculus (Mouse).